A 462-amino-acid polypeptide reads, in one-letter code: Glycoprotein endo-alpha-1,2-mannosidase (462 aa).

Over 1–9 the chain is Cytoplasmic; the sequence is MAKFRRRTC. A helical; Signal-anchor for type II membrane protein membrane pass occupies residues 10–30; that stretch reads ILLSLFILFIFSLMMGLKMLW. Topologically, residues 31–462 are lumenal; it reads PNAASFGPPF…YALDQQQPAS (432 aa). Positions 60–462 are catalytic; it reads DFQRSDRINM…YALDQQQPAS (403 aa).

It belongs to the glycosyl hydrolase 99 family. Undergoes proteolytic cleavage in the C-terminal region.

The protein resides in the golgi apparatus membrane. It catalyses the reaction N-{alpha-Glc-(1-&gt;3)-alpha-Man-(1-&gt;2)-alpha-Man-(1-&gt;2)-alpha-Man-(1-&gt;3)-[alpha-Man-(1-&gt;2)-alpha-Man-(1-&gt;3)-[alpha-Man-(1-&gt;2)-alpha-Man-(1-&gt;6)]-alpha-Man-(1-&gt;6)]-beta-Man-(1-&gt;4)-beta-GlcNAc-(1-&gt;4)-beta-GlcNAc}-L-asparaginyl-[protein] + H2O = alpha-D-glucosyl-(1-&gt;3)-D-mannopyranose + N(4)-{alpha-D-Man-(1-&gt;2)-alpha-D-Man-(1-&gt;3)-[alpha-D-Man-(1-&gt;2)-alpha-D-Man-(1-&gt;3)-[alpha-D-Man-(1-&gt;2)-alpha-D-Man-(1-&gt;6)]-alpha-D-Man-(1-&gt;6)]-beta-D-Man-(1-&gt;4)-beta-D-GlaNAc-(1-&gt;4)-beta-D-GlcNAc}-L-asparaginyl-[protein] (N-glucan mannose isomer 8A1,2,3B1,2). The polypeptide is Glycoprotein endo-alpha-1,2-mannosidase (Manea) (Mus musculus (Mouse)).